Consider the following 1056-residue polypeptide: Pleckstrin homology domain-containing family M member 1 (1056 aa).

One can recognise an RUN domain in the interval 41–183 (TSEDGDANTM…LSFELSYKSA (143 aa)). Disordered regions lie at residues 215-245 (QRKE…RRNQ), 277-303 (GSKS…EDSD), and 360-422 (PAQA…QAHD). Phosphoserine is present on Ser-219. Over residues 389–404 (PVESTSGQQPSSTVSE) the composition is skewed to polar residues. Ser-432 and Ser-435 each carry phosphoserine. Positions 451–483 (SREQPLESASDHPIASYRGTPGSRPGLHRHFSQ) are disordered. Ser-490 is modified (phosphoserine). Residues 534-625 (GLMKLGTVER…WLDRVREALQ (92 aa)) form the PH 1 domain. An LIR motif is present at residues 632 to 638 (EDEWVNV). Positions 654–1056 (CLSPSDLLSE…RKYQEQNIFA (403 aa)) are interaction with RAB7A. Positions 683-777 (DAIKESLLYL…WRDLVRKVLA (95 aa)) constitute a PH 2 domain. A Phorbol-ester/DAG-type zinc finger spans residues 986–1040 (QHVYHCDLCTQRGFICQICQHHDIIFPFEFDTTVRCAECKTVFHQSCQAVVKKGC).

Interacts (via N- and C-terminus) with RAB7A (GTP-bound form). Simultaneously interacts with RAB7A and ARL8B; bringing about clustering and fusion of late endosomes and lysosomes. Interacts (via RUN domain) with ARL8B (GTP-bound form); the interaction is required for PLEKHM1 localization to lysosomes and for ARL8B function in delivery and degradation of endocytic and autophagic cargo in lysosomes. PLEKHM1 and PLEKHM2 compete for interaction with ARL8B. Interacts with ARL8A; the interaction is weaker than with ARL8B. Interacts with VPS41, VPS11, VPS18, VPS33A and VPS39; indicative for an association with the HOPS complex; the interactions with, at least, VPS41, VPS11, VPS18 and VPS33A require ARL8B. Interacts with GABARAP, GABARAPL, GABARAPL2, MAP1LC3A, MAP1LC3B and MAP1LC3C. Interacts with PAFAH1B. Interacts (via N- and C-terminus) with NDEL1. Interacts (via C-terminus) with MAP3K7. Interacts (via N- and C-terminus) with FAM98A. Interacts (via C-terminus) with DEF8; this interaction is weak but increased in a RAB7A-dependent manner. In colon carcinoma and breast carcinoma cells, it interacts with sialyl-lex-positive protein. As to quaternary structure, (Microbial infection) Interacts with Salmonella typhimurium sifA. As to expression, expressed in placenta, liver, prostate, thymus, spleen, ovary, colon, colon carcinoma and peripheral blood lymphocytes (PBL). Weakly expressed in brain, lung, kidney, and testis. No expression in heart, skeletal muscle, pancreas and small intestine. Predominantly expressed in the breast carcinoma cell line MCF-7.

The protein localises to the autolysosome membrane. The protein resides in the endosome membrane. It is found in the late endosome membrane. It localises to the lysosome membrane. Its function is as follows. Acts as a multivalent adapter protein that regulates Rab7-dependent and HOPS complex-dependent fusion events in the endolysosomal system and couples autophagic and the endocytic trafficking pathways. Acts as a dual effector of RAB7A and ARL8B that simultaneously binds these GTPases, bringing about clustering and fusion of late endosomes and lysosomes. Required for late stages of endolysosomal maturation, facilitating both endocytosis-mediated degradation of growth factor receptors and autophagosome clearance. Interaction with Arl8b is a crucial factor in the terminal maturation of autophagosomes and to mediate autophagosome-lysosome fusion. Positively regulates lysosome peripheral distribution and ruffled border formation in osteoclasts. May be involved in negative regulation of endocytic transport from early endosome to late endosome/lysosome implicating its association with Rab7. May have a role in sialyl-lex-mediated transduction of apoptotic signals. Involved in bone resorption. In terms of biological role, (Microbial infection) In case of infection contributes to Salmonella typhimurium pathogenesis by supporting the integrity of the Salmonella-containing vacuole (SCV) probably in concert with the HOPS complex and Rab7. This Homo sapiens (Human) protein is Pleckstrin homology domain-containing family M member 1.